The chain runs to 1043 residues: Isoleucine--tRNA ligase (1043 aa).

Residues Pro46 and His57 each coordinate L-isoleucyl-5'-AMP. A 'HIGH' region motif is present at residues Pro47–His57. Zn(2+) is bound by residues Cys181 and Cys184. His319 and Asp328 together coordinate L-valine. The Zn(2+) site is built by Cys389, Cys392, Cys461, Cys464, Cys502, and Cys504. L-isoleucyl-5'-AMP contacts are provided by Glu550, Gly551, Asp553, Gln554, and His581. The 'KMSKS' region motif lies at Lys591 to Ser595. Residue Lys594 participates in ATP binding.

The protein belongs to the class-I aminoacyl-tRNA synthetase family. IleS type 2 subfamily. As to quaternary structure, monomer. Zn(2+) serves as cofactor.

It localises to the cytoplasm. It carries out the reaction tRNA(Ile) + L-isoleucine + ATP = L-isoleucyl-tRNA(Ile) + AMP + diphosphate. Catalyzes the attachment of isoleucine to tRNA(Ile). As IleRS can inadvertently accommodate and process structurally similar amino acids such as valine, to avoid such errors it has two additional distinct tRNA(Ile)-dependent editing activities. One activity is designated as 'pretransfer' editing and involves the hydrolysis of activated Val-AMP. The other activity is designated 'posttransfer' editing and involves deacylation of mischarged Val-tRNA(Ile). This chain is Isoleucine--tRNA ligase (ileS), found in Thermus thermophilus (strain ATCC 27634 / DSM 579 / HB8).